The chain runs to 536 residues: MALTSFLPAPTQLSQDQLEAEEKARSQRSRQTSLVSSRREPPPYGYRKGWIPRLLEDFGDGGAFPEIHVAQYPLDMGRKKKMSNALAIQVDSEGKIKYDAIARQGQSKDKVIYSKYTDLVPKEVMNADDPDLQRPDEEAIKEITEKTRVALEKSVSQKVAAAMPVRAADKLAPAQYIRYTPSQQGVAFNSGAKQRVIRMVEMQKDPMEPPRFKINKKIPRGPPSPPAPVMHSPSRKMTVKEQQEWKIPPCISNWKNAKGYTIPLDKRLAADGRGLQTVHINENFAKLAEALYIADRKAREAVEMRAQVERKMAQKEKEKHEEKLREMAQKARERRAGIKTHVEKEDGEARERDEIRHDRRKERQHDRNLSRAAPDKRSKLQRNENRDISEVIALGVPNPRTSNEVQYDQRLFNQSKGMDSGFAGGEDEIYNVYDQAWRGGKDMAQSIYRPSKNLDKDMYGDDLEARIKTNRFVPDKEFSGSDRRQRGREGPVQFEEDPFGLDKFLEEAKQHGGSKRPSDSSRPKEHEHEGKKRRKE.

The tract at residues 1–46 is disordered; it reads MALTSFLPAPTQLSQDQLEAEEKARSQRSRQTSLVSSRREPPPYGY. An N-acetylalanine modification is found at alanine 2. Position 14 is a phosphoserine (serine 14). Lysine 23 is covalently cross-linked (Glycyl lysine isopeptide (Lys-Gly) (interchain with G-Cter in SUMO2)). Residues 59 to 79 are interaction with PPIL1; the sequence is GDGGAFPEIHVAQYPLDMGRK. Glycyl lysine isopeptide (Lys-Gly) (interchain with G-Cter in SUMO2) cross-links involve residues lysine 81, lysine 97, lysine 115, lysine 122, lysine 141, lysine 158, and lysine 170. Residues 174-339 form an SNW region; the sequence is AQYIRYTPSQ…KARERRAGIK (166 aa). Phosphoserine is present on residues serine 182 and serine 190. Residue lysine 193 forms a Glycyl lysine isopeptide (Lys-Gly) (interchain with G-Cter in SUMO2) linkage. The disordered stretch occupies residues 209-233; sequence PPRFKINKKIPRGPPSPPAPVMHSP. Phosphoserine occurs at positions 224, 232, and 234. Residues lysine 240, lysine 258, lysine 286, lysine 339, lysine 344, lysine 416, and lysine 441 each participate in a glycyl lysine isopeptide (Lys-Gly) (interchain with G-Cter in SUMO2) cross-link. The segment at 311–386 is disordered; the sequence is KMAQKEKEKH…RSKLQRNENR (76 aa). Serine 446 carries the phosphoserine modification. Lysine 452 is covalently cross-linked (Glycyl lysine isopeptide (Lys-Gly) (interchain with G-Cter in SUMO2)). Composition is skewed to basic and acidic residues over residues 470–489 and 503–530; these read NRFV…RGRE and KFLE…EHEG. Residues 470 to 536 form a disordered region; that stretch reads NRFVPDKEFS…EHEGKKRRKE (67 aa). Phosphoserine occurs at positions 479 and 481. Residue lysine 509 forms a Glycyl lysine isopeptide (Lys-Gly) (interchain with G-Cter in SUMO2) linkage.

This sequence belongs to the SNW family. In terms of assembly, identified in the spliceosome C complex. Associates with U4/U6-U5 tri-small nuclear ribonucleoproteins (U4/U6-U5 tri-snRNPs). Component of the minor spliceosome, which splices U12-type introns. Interacts with SKI, SMAD2,SMAD3, RBPJ, RB1, PABPN1, MAGEA1, SIRT1, FOXN3, U2AF2, DAXX and ATP1B4. Interacts with PPIL1. Interacts with VDR and RXRA; preferentially associates with VDR:RXRA heterodimers. Interacts with NCOR2. Interacts with MAML1. Interacts with NOTCH1 NICD; the interaction involves multimerized NOTCH1 NICD. Forms a complex with NOTCH1 NICD and MAML1; the association is dissociated by RBPJ. Associates with positive transcription elongation factor b (P-TEFb). Component of the SNARP complex which consists at least of SNIP1, SNW1, THRAP3, BCLAF1 and PNN. (Microbial infection) Interacts with human papillomavirus type-16 (HPV16) E7 protein. As to quaternary structure, (Microbial infection) Interacts with EBV EBNA2; EBNA2 competes with NCOR2 for interaction with SNW1.

It is found in the nucleus. Involved in pre-mRNA splicing as component of the spliceosome. As a component of the minor spliceosome, involved in the splicing of U12-type introns in pre-mRNAs. Required for the specific splicing of CDKN1A pre-mRNA; the function probably involves the recruitment of U2AF2 to the mRNA. May recruit PPIL1 to the spliceosome. May be involved in cyclin-D1/CCND1 mRNA stability through the SNARP complex which associates with both the 3'end of the CCND1 gene and its mRNA. Involved in transcriptional regulation. Modulates TGF-beta-mediated transcription via association with SMAD proteins, MYOD1-mediated transcription via association with PABPN1, RB1-mediated transcriptional repression, and retinoid-X receptor (RXR)- and vitamin D receptor (VDR)-dependent gene transcription in a cell line-specific manner probably involving coactivators NCOA1 and GRIP1. Is involved in NOTCH1-mediated transcriptional activation. Binds to multimerized forms of Notch intracellular domain (NICD) and is proposed to recruit transcriptional coactivators such as MAML1 to form an intermediate preactivation complex which associates with DNA-bound CBF-1/RBPJ to form a transcriptional activation complex by releasing SNW1 and redundant NOTCH1 NICD. Its function is as follows. (Microbial infection) Is recruited by HIV-1 Tat to Tat:P-TEFb:TAR RNA complexes and is involved in Tat transcription by recruitment of MYC, MEN1 and TRRAP to the HIV promoter. Functionally, (Microbial infection) Proposed to be involved in transcriptional activation by EBV EBNA2 of CBF-1/RBPJ-repressed promoters. This chain is SNW domain-containing protein 1 (SNW1), found in Homo sapiens (Human).